Here is a 577-residue protein sequence, read N- to C-terminus: Arginine--tRNA ligase (577 aa).

A 'HIGH' region motif is present at residues 122-132 (PNVAKEMHVGH).

This sequence belongs to the class-I aminoacyl-tRNA synthetase family. Monomer.

It is found in the cytoplasm. The enzyme catalyses tRNA(Arg) + L-arginine + ATP = L-arginyl-tRNA(Arg) + AMP + diphosphate. The protein is Arginine--tRNA ligase of Salmonella paratyphi A (strain ATCC 9150 / SARB42).